The following is a 185-amino-acid chain: Elongation factor P (185 aa).

This sequence belongs to the elongation factor P family.

The protein localises to the cytoplasm. It functions in the pathway protein biosynthesis; polypeptide chain elongation. Functionally, involved in peptide bond synthesis. Stimulates efficient translation and peptide-bond synthesis on native or reconstituted 70S ribosomes in vitro. Probably functions indirectly by altering the affinity of the ribosome for aminoacyl-tRNA, thus increasing their reactivity as acceptors for peptidyl transferase. The sequence is that of Elongation factor P from Burkholderia vietnamiensis (strain G4 / LMG 22486) (Burkholderia cepacia (strain R1808)).